The sequence spans 26 residues: Omega-conotoxin CVIC (26 aa).

Intrachain disulfides connect Cys-1–Cys-16, Cys-8–Cys-20, and Cys-15–Cys-26. Cys-26 is modified (cysteine amide).

The protein belongs to the conotoxin O1 superfamily. As to expression, expressed by the venom duct.

It is found in the secreted. Its function is as follows. Omega-conotoxins act at presynaptic membranes, they bind and block voltage-gated calcium channels (Cav). This toxin blocks N-, P- and Q-type calcium channels. In Conus catus (Cat cone), this protein is Omega-conotoxin CVIC.